The sequence spans 223 residues: Homeobox protein egl-5 (223 aa).

Low complexity predominate over residues 1-25; that stretch reads MNTSTSAFDFGSSTASSAATSTTSS. Disordered stretches follow at residues 1–58 and 168–191; these read MNTS…STEA and KKEK…PPKG. A DNA-binding region (homeobox) is located at residues 112–171; sequence SKKGRQTYQRYQTSVLEAKFQQSSYVSKKQREELRLQTQLTDRQIKIWFQNRRMKAKKEK.

It belongs to the Abd-B homeobox family. In terms of assembly, interacts with the TCF transcription factor pop-1.

Its subcellular location is the nucleus. Its function is as follows. Involved in control of cell fate and pattern formation along the anterior-posterior axis, acting mainly in the tail. Required during embryonic and postembryonic development. Essential for the determination of specific neurons, including the PLM touch neurons. Plays a role in neural fate specification in the hermaphrodite-specific neuron (HSN)/PHB neuron lineage, acting in concert with T-box protein tbx-2 and the asymmetric cell division protein ham-1. Required for male gonadal fate determination, acting in parallel with a WNT/beta-catenin pathway, perhaps by recruiting pop-1 to male-specific gonadal target genes. Involved in development of the hermaphrodite hindgut, and for the response to rectal infection by the coryneform bacterium M.nematophilum. This chain is Homeobox protein egl-5, found in Caenorhabditis elegans.